Here is a 380-residue protein sequence, read N- to C-terminus: Chorismate synthase (380 aa).

NADP(+) contacts are provided by Arg48 and Arg53. FMN contacts are provided by residues 126–128 (RAS), Gly284, 299–303 (KPTSS), and Arg326.

The protein belongs to the chorismate synthase family. FMNH2 is required as a cofactor.

The enzyme catalyses 5-O-(1-carboxyvinyl)-3-phosphoshikimate = chorismate + phosphate. The protein operates within metabolic intermediate biosynthesis; chorismate biosynthesis; chorismate from D-erythrose 4-phosphate and phosphoenolpyruvate: step 7/7. In terms of biological role, catalyzes the anti-1,4-elimination of the C-3 phosphate and the C-6 proR hydrogen from 5-enolpyruvylshikimate-3-phosphate (EPSP) to yield chorismate, which is the branch point compound that serves as the starting substrate for the three terminal pathways of aromatic amino acid biosynthesis. This reaction introduces a second double bond into the aromatic ring system. This chain is Chorismate synthase, found in Ignicoccus hospitalis (strain KIN4/I / DSM 18386 / JCM 14125).